A 115-amino-acid polypeptide reads, in one-letter code: Succinate dehydrogenase hydrophobic membrane anchor subunit (115 aa).

Residues 1–15 (MVSNASALGRNGVHD) are Cytoplasmic-facing. A helical membrane pass occupies residues 16–36 (FILVRATAIVLTLYIIYMVGF). Over 37 to 58 (FATSGELTYEVWIGFFASAFTK) the chain is Periplasmic. Residues 59–80 (VFTLLALFSILIHAWIGMWQVL) traverse the membrane as a helical segment. His71 is a binding site for heme. Topologically, residues 81–90 (TDYVKPLALR) are cytoplasmic. An a ubiquinone-binding site is contributed by Tyr83. The helical transmembrane segment at 91 to 115 (LMLQLVIVVALVVYVIYGFVVVWGV) threads the bilayer.

In terms of assembly, part of an enzyme complex containing four subunits: a flavoprotein, an iron-sulfur protein, plus two membrane-anchoring proteins, SdhC and SdhD. The complex can form homotrimers. Heme serves as cofactor.

Its subcellular location is the cell inner membrane. It participates in carbohydrate metabolism; tricarboxylic acid cycle. In terms of biological role, membrane-anchoring subunit of succinate dehydrogenase (SDH). This Escherichia coli O6:H1 (strain CFT073 / ATCC 700928 / UPEC) protein is Succinate dehydrogenase hydrophobic membrane anchor subunit (sdhD).